The sequence spans 585 residues: Probable ubiquitin carboxyl-terminal hydrolase 9 (585 aa).

Residues 1-23 (MSLLRWMGMNSPGSTDRRKSTWE) are disordered. The region spanning 41-424 (YGLTNYGNTC…TAYVLFYTAA (384 aa)) is the USP domain. Cys-50 serves as the catalytic Nucleophile. Residues 85-110 (CTKTNHPESSSSRHSKKKSMENRKSS) form a disordered region. His-375 serves as the catalytic Proton acceptor. Over residues 447–470 (SQLKQESVEVSNLSSTPRSNSTIT) the composition is skewed to polar residues. The disordered stretch occupies residues 447 to 473 (SQLKQESVEVSNLSSTPRSNSTITYPD). Phosphoserine is present on Ser-505. Disordered stretches follow at residues 511-530 (FHSR…SRSF) and 540-585 (KFFG…RSKR). Polar residues predominate over residues 542–551 (FGSSQSNSPK). Residue Ser-549 is modified to Phosphoserine. Residues 553 to 570 (SPLRDTHKSSDEHSESKH) are compositionally biased toward basic and acidic residues. Residues 574 to 585 (LPWQFSRSRSKR) show a composition bias toward polar residues.

This sequence belongs to the peptidase C19 family. In terms of assembly, interacts with bun107 and bun62.

The protein localises to the nucleus. It is found in the cytoplasm. The protein resides in the cell tip. The catalysed reaction is Thiol-dependent hydrolysis of ester, thioester, amide, peptide and isopeptide bonds formed by the C-terminal Gly of ubiquitin (a 76-residue protein attached to proteins as an intracellular targeting signal).. Its function is as follows. Ubiquitin C-terminal hydrolase involved in regulating actin dynamics and/or endocytosis at cell tips and septa. The protein is Probable ubiquitin carboxyl-terminal hydrolase 9 (ubp9) of Schizosaccharomyces pombe (strain 972 / ATCC 24843) (Fission yeast).